We begin with the raw amino-acid sequence, 781 residues long: N-acetylneuraminate (7)9-O-acetyltransferase (781 aa).

Residues Met1–Gln15 lie on the Cytoplasmic side of the membrane. The chain crosses the membrane as a helical span at residues Tyr16–Phe36. Residues His37 to Lys308 are Lumenal-facing. Catalysis depends on Ser94, which acts as the Acyl-ester intermediate. Residues Asn139, Asn185, and Asn239 are each glycosylated (N-linked (GlcNAc...) asparagine). Active-site residues include Asp264 and His267. A helical membrane pass occupies residues Leu309–His329. The segment at Arg330–Val350 is disordered. Topologically, residues Arg330–Asn354 are cytoplasmic. A helical membrane pass occupies residues Pro355–Cys375. The Lumenal portion of the chain corresponds to Asp376–Lys386. A helical transmembrane segment spans residues Phe387 to Tyr407. The Cytoplasmic segment spans residues Ser408–Gln430. A helical transmembrane segment spans residues Leu431 to Val451. Arg452 is a topological domain (lumenal). A helical transmembrane segment spans residues Val453–Lys473. At Gly474–Gly477 the chain is on the cytoplasmic side. The helical transmembrane segment at Leu478 to Val498 threads the bilayer. At Met499–Gln504 the chain is on the lumenal side. A helical membrane pass occupies residues Phe505 to Leu525. The Cytoplasmic segment spans residues Trp526–Ser537. Residues Ala538–Phe558 traverse the membrane as a helical segment. Over Ala559–Arg595 the chain is Lumenal. The chain crosses the membrane as a helical span at residues Phe596 to Leu616. Residues Leu617–Lys629 are Cytoplasmic-facing. Residues Ile630 to Ser650 traverse the membrane as a helical segment. Residues Gly651–Glu660 are Lumenal-facing. A glycan (N-linked (GlcNAc...) asparagine) is linked at Asn654. Residues Met661 to Ala681 form a helical membrane-spanning segment. Over Arg682 to Ser687 the chain is Cytoplasmic. The chain crosses the membrane as a helical span at residues Phe688–Leu708. The Lumenal portion of the chain corresponds to Ala709–Gly714. A helical membrane pass occupies residues Ile715–Val735. Residues Cys736 to Glu756 lie on the Cytoplasmic side of the membrane. The helical transmembrane segment at Ser757–Leu777 threads the bilayer. Topologically, residues Ser778 to Asp781 are lumenal.

Belongs to the PC-esterase family. CASD1 subfamily.

The protein resides in the golgi apparatus membrane. It carries out the reaction CMP-N-acetyl-beta-neuraminate + acetyl-CoA = CMP-N-acetyl-9-O-acetyl-beta-neuraminate + CoA. The catalysed reaction is a ganglioside GD3 (d18:1(4E)) + acetyl-CoA = a ganglioside Ac-O-7-GD3(d18:1(4E)) + CoA. The enzyme catalyses CMP-N-acetyl-beta-neuraminate + acetyl-CoA = CMP-N-acetyl-7-O-acetyl-beta-neuraminate + CoA. Key enzyme in the biosynthesis of O-acetylated (O-Ac) sialoglycans such as gangliosides O-AcGD3 and O-AcGD2, which affect various processes such as cell-cell interactions, host-pathogen recognition. Catalyzes the transfer of an acetyl group from a donor, the acetyl-coenzyme-A molecule (acetyl-CoA), to the C7/8/9 OH-position of a sialic acid residue. The primary site of O-acetyl group transfer on sialic acid seems to depend on cell type and can be C7, from which the O-acetyl group could subsequently migrate to the C8 and then to the C9 position, or at C9 with possibility of migrating to the C8 and then to the C7 position. Together with ST8SIA1 (GD3 synthase) it increases the levels of ganglioside Ac-O-7-GD3. Can transfer the acetyl group from acetyl-CoA to free sialate (N-acetylneuraminate, Neu5Ac) in vitro, but has preferred substrate specificity for CMP-activated sialate (CMP-Neu5Ac), resulting in the formation of 9-O-acetylated CMP-Neu5Ac (CMP-Neu5,9Ac2). CMP-Neu5,9Ac2 may be used by sialyltransferases as a sialate donor for glycoconjugate acceptors such as ganglioside GD3. O-acetylation at position C9 of ganglioside GD3 can counteract the pro-apoptotic effects of the ganglioside GD3 in tumor cells. This is N-acetylneuraminate (7)9-O-acetyltransferase from Danio rerio (Zebrafish).